Reading from the N-terminus, the 574-residue chain is Desiccation/radiation resistance protein DR_1769 (574 aa).

The signal sequence occupies residues 1–33; the sequence is MPDPAARRFSLPPFPLAALALSVALLGAPASLA. The segment covering 400-438 has biased composition (low complexity); sequence TAQTQARQAAAAASTSQQPRLPTLAQAPAPTPAPAQTTP. Residues 400–461 are disordered; the sequence is TAQTQARQAA…APVPPVASPA (62 aa). A compositionally biased stretch (pro residues) spans 439 to 459; the sequence is RPQPTPAQPATPAAPVPPVAS.

Functionally, plays an important role in resistance to desiccation and radiation, maybe by protecting genome integrity under extreme conditions. The sequence is that of Desiccation/radiation resistance protein DR_1769 from Deinococcus radiodurans (strain ATCC 13939 / DSM 20539 / JCM 16871 / CCUG 27074 / LMG 4051 / NBRC 15346 / NCIMB 9279 / VKM B-1422 / R1).